We begin with the raw amino-acid sequence, 279 residues long: Thymidylate synthase (279 aa).

Residue Arg132–Arg133 participates in dUMP binding. Cys153 serves as the catalytic Nucleophile. DUMP contacts are provided by residues Arg178–Asp181, Asn189, and His219–Tyr221. A (6R)-5,10-methylene-5,6,7,8-tetrahydrofolate-binding site is contributed by Asp181. Residue Ala278 participates in (6R)-5,10-methylene-5,6,7,8-tetrahydrofolate binding.

It belongs to the thymidylate synthase family. Bacterial-type ThyA subfamily. As to quaternary structure, homodimer.

Its subcellular location is the cytoplasm. It carries out the reaction dUMP + (6R)-5,10-methylene-5,6,7,8-tetrahydrofolate = 7,8-dihydrofolate + dTMP. The protein operates within pyrimidine metabolism; dTTP biosynthesis. In terms of biological role, catalyzes the reductive methylation of 2'-deoxyuridine-5'-monophosphate (dUMP) to 2'-deoxythymidine-5'-monophosphate (dTMP) while utilizing 5,10-methylenetetrahydrofolate (mTHF) as the methyl donor and reductant in the reaction, yielding dihydrofolate (DHF) as a by-product. This enzymatic reaction provides an intracellular de novo source of dTMP, an essential precursor for DNA biosynthesis. This chain is Thymidylate synthase, found in Lactococcus lactis subsp. cremoris (strain SK11).